The following is a 955-amino-acid chain: B3 domain-containing protein Os07g0563300 (955 aa).

2 stretches are compositionally biased toward pro residues: residues 1 to 20 and 29 to 45; these read MSSPAQPPPTRPPVAAPPPS and VQPPPLQPKPPPHPQQP. Disordered regions lie at residues 1–81 and 325–392; these read MSSP…QRPR and ARKG…SSSL. Over residues 62–71 the composition is skewed to low complexity; that stretch reads QHQQQQQGPP. Positions 332–342 are enriched in polar residues; sequence DPCSSVSTTFK. Residues 343–355 are compositionally biased toward basic and acidic residues; it reads LDSHHPSILKDDP. Low complexity predominate over residues 382 to 392; sequence QQQQQMASSSL. Residues 453-554 constitute a DNA-binding region (TF-B3); it reads FEKMLSASDA…KLVMGFRKAT (102 aa). 2 stretches are compositionally biased toward polar residues: residues 556–565 and 598–608; these read LSAEQDQPTK and NTESKSSSPVE. Positions 556–642 are disordered; it reads LSAEQDQPTK…PLPVKRKATS (87 aa). Residues 708-758 form a CW-type zinc finger; it reads SGENHQWAQCEDCSKWRKLPVDALLPSKWTCSDNKWDSERSSCDSAQEINM. Residues C717, C720, C738, and C750 each coordinate Zn(2+). Residues 856–955 are disordered; sequence MMRREKRQQS…ATRLLRDNPT (100 aa). A compositionally biased stretch (basic and acidic residues) spans 862–877; sequence RQQSEKDSGVPRKREP. Polar residues-rich tracts occupy residues 878-900 and 920-933; these read GQSSEPVPQSGSGAHPTSTSSPH and TSSPVKNQIDLNSQ. The segment covering 939–955 has biased composition (basic and acidic residues); the sequence is EQSPKSDATRLLRDNPT.

It localises to the nucleus. The protein is B3 domain-containing protein Os07g0563300 of Oryza sativa subsp. japonica (Rice).